The following is a 94-amino-acid chain: Co-chaperonin GroES (94 aa).

It belongs to the GroES chaperonin family. In terms of assembly, heptamer of 7 subunits arranged in a ring. Interacts with the chaperonin GroEL.

The protein resides in the cytoplasm. Its function is as follows. Together with the chaperonin GroEL, plays an essential role in assisting protein folding. The GroEL-GroES system forms a nano-cage that allows encapsulation of the non-native substrate proteins and provides a physical environment optimized to promote and accelerate protein folding. GroES binds to the apical surface of the GroEL ring, thereby capping the opening of the GroEL channel. The chain is Co-chaperonin GroES from Lactococcus lactis subsp. cremoris (strain MG1363).